Consider the following 465-residue polypeptide: Cysteine--tRNA ligase (465 aa).

Residue cysteine 29 coordinates Zn(2+). The short motif at 31–41 is the 'HIGH' region element; sequence PTVYNYIHIGN. Zn(2+) contacts are provided by cysteine 209, histidine 234, and glutamate 238. A 'KMSKS' region motif is present at residues 266–270; the sequence is KMSKS. Lysine 269 contributes to the ATP binding site. Phosphoserine is present on serine 270.

Belongs to the class-I aminoacyl-tRNA synthetase family. In terms of assembly, monomer. Zn(2+) is required as a cofactor.

It localises to the cytoplasm. The catalysed reaction is tRNA(Cys) + L-cysteine + ATP = L-cysteinyl-tRNA(Cys) + AMP + diphosphate. The protein is Cysteine--tRNA ligase of Bacillus cereus (strain ATCC 10987 / NRS 248).